A 494-amino-acid chain; its full sequence is 3-octaprenyl-4-hydroxybenzoate carboxy-lyase (494 aa).

Asn172 contributes to the Mn(2+) binding site. Residues 175 to 177 (IYR), 189 to 191 (RWL), and 194 to 195 (RG) each bind prenylated FMN. Glu238 lines the Mn(2+) pocket. Asp294 functions as the Proton donor in the catalytic mechanism.

This sequence belongs to the UbiD family. As to quaternary structure, homohexamer. Prenylated FMN is required as a cofactor. Requires Mn(2+) as cofactor.

The protein localises to the cell membrane. It catalyses the reaction a 4-hydroxy-3-(all-trans-polyprenyl)benzoate + H(+) = a 2-(all-trans-polyprenyl)phenol + CO2. It participates in cofactor biosynthesis; ubiquinone biosynthesis. In terms of biological role, catalyzes the decarboxylation of 3-octaprenyl-4-hydroxy benzoate to 2-octaprenylphenol, an intermediate step in ubiquinone biosynthesis. In Janthinobacterium sp. (strain Marseille) (Minibacterium massiliensis), this protein is 3-octaprenyl-4-hydroxybenzoate carboxy-lyase.